The primary structure comprises 297 residues: Bifunctional protein FolD (297 aa).

NADP(+)-binding positions include 164 to 166 (GRS), S193, and V234.

The protein belongs to the tetrahydrofolate dehydrogenase/cyclohydrolase family. As to quaternary structure, homodimer.

It carries out the reaction (6R)-5,10-methylene-5,6,7,8-tetrahydrofolate + NADP(+) = (6R)-5,10-methenyltetrahydrofolate + NADPH. The enzyme catalyses (6R)-5,10-methenyltetrahydrofolate + H2O = (6R)-10-formyltetrahydrofolate + H(+). Its pathway is one-carbon metabolism; tetrahydrofolate interconversion. Its function is as follows. Catalyzes the oxidation of 5,10-methylenetetrahydrofolate to 5,10-methenyltetrahydrofolate and then the hydrolysis of 5,10-methenyltetrahydrofolate to 10-formyltetrahydrofolate. The protein is Bifunctional protein FolD of Natronomonas pharaonis (strain ATCC 35678 / DSM 2160 / CIP 103997 / JCM 8858 / NBRC 14720 / NCIMB 2260 / Gabara) (Halobacterium pharaonis).